The primary structure comprises 759 residues: Phosphoribosylformylglycinamidine synthase subunit PurL (759 aa).

His61 is an active-site residue. Positions 64 and 105 each coordinate ATP. A Mg(2+)-binding site is contributed by Glu107. Substrate-binding positions include 108–111 (SHNH) and Arg130. His109 functions as the Proton acceptor in the catalytic mechanism. Asp131 is a Mg(2+) binding site. Gln260 lines the substrate pocket. Asp288 is a Mg(2+) binding site. 332–334 (ESQ) provides a ligand contact to substrate. ATP-binding residues include Asp520 and Gly557. Asn558 is a Mg(2+) binding site. Substrate is bound at residue Ser560.

The protein belongs to the FGAMS family. In terms of assembly, monomer. Part of the FGAM synthase complex composed of 1 PurL, 1 PurQ and 2 PurS subunits.

The protein resides in the cytoplasm. It catalyses the reaction N(2)-formyl-N(1)-(5-phospho-beta-D-ribosyl)glycinamide + L-glutamine + ATP + H2O = 2-formamido-N(1)-(5-O-phospho-beta-D-ribosyl)acetamidine + L-glutamate + ADP + phosphate + H(+). It functions in the pathway purine metabolism; IMP biosynthesis via de novo pathway; 5-amino-1-(5-phospho-D-ribosyl)imidazole from N(2)-formyl-N(1)-(5-phospho-D-ribosyl)glycinamide: step 1/2. In terms of biological role, part of the phosphoribosylformylglycinamidine synthase complex involved in the purines biosynthetic pathway. Catalyzes the ATP-dependent conversion of formylglycinamide ribonucleotide (FGAR) and glutamine to yield formylglycinamidine ribonucleotide (FGAM) and glutamate. The FGAM synthase complex is composed of three subunits. PurQ produces an ammonia molecule by converting glutamine to glutamate. PurL transfers the ammonia molecule to FGAR to form FGAM in an ATP-dependent manner. PurS interacts with PurQ and PurL and is thought to assist in the transfer of the ammonia molecule from PurQ to PurL. This chain is Phosphoribosylformylglycinamidine synthase subunit PurL, found in Thermoplasma acidophilum (strain ATCC 25905 / DSM 1728 / JCM 9062 / NBRC 15155 / AMRC-C165).